The following is a 599-amino-acid chain: Beta-(1--&gt;2)glucan export ATP-binding/permease protein NdvA (599 aa).

Positions 21-301 constitute an ABC transmembrane type-1 domain; sequence TITMCVASVL…ISAFINQTVT (281 aa). Transmembrane regions (helical) follow at residues 22–42, 55–75, 156–176, 248–268, and 276–296; these read ITMCVASVLVALVTLAEPVLF, IFSPLLMWAALGGFNIMAAVF, MRMSLVLIVLGVIYVMIGQLV, MASTFSMVVVLVLGAYFVTKG, and IAFIGFAQLMIGRLDQISAFI. An ABC transporter domain is found at 335 to 569; that stretch reads IVFDNVTYEF…GGRFSDLLRA (235 aa). 368 to 375 contacts ATP; that stretch reads GPTGAGKT.

It belongs to the ABC transporter superfamily. Beta-(1--&gt;2)glucan exporter (TC 3.A.1.108.1) family. Homodimer.

It localises to the cell inner membrane. It catalyses the reaction [(1-&gt;2)-beta-D-glucosyl](n)(in) + ATP + H2O = [(1-&gt;2)-beta-D-glucosyl](n)(out) + ADP + phosphate + H(+). In terms of biological role, involved in beta-(1--&gt;2)glucan export. Its export to the periplasmic space is required to exert its action as a virulence factor. Transmembrane domains (TMD) form a pore in the inner membrane and the ATP-binding domain (NBD) is responsible for energy generation. The sequence is that of Beta-(1--&gt;2)glucan export ATP-binding/permease protein NdvA from Brucella abortus (strain 2308).